Here is a 307-residue protein sequence, read N- to C-terminus: Non-homologous end joining protein Ku (307 aa).

The Ku domain occupies 11–179 (LSFGLVSIPV…EVRSMKDLNI (169 aa)). Composition is skewed to low complexity over residues 257 to 267 (RGGAKAKPAAA) and 290 to 307 (ARAP…RARK). The segment at 257–307 (RGGAKAKPAAAPRRKAPEPVAGMAEATRARKPAARAPKSPAEAPAKVRARK) is disordered.

Belongs to the prokaryotic Ku family. As to quaternary structure, homodimer. Interacts with LigD.

In terms of biological role, with LigD forms a non-homologous end joining (NHEJ) DNA repair enzyme, which repairs dsDNA breaks with reduced fidelity. Binds linear dsDNA with 5'- and 3'- overhangs but not closed circular dsDNA nor ssDNA. Recruits and stimulates the ligase activity of LigD. This chain is Non-homologous end joining protein Ku, found in Paraburkholderia phymatum (strain DSM 17167 / CIP 108236 / LMG 21445 / STM815) (Burkholderia phymatum).